Reading from the N-terminus, the 255-residue chain is MALAEAPRPGPLMDPEWHGSPEGKEYLGCILRKKKRKFFGLIERPVLSPQLPADIASYKLFVCGRSGAGKTSFIAKLAGLEVPSMHHETTGIQTTCVYWPVRPTHSARPVIFRFQFWDCGEGALRKFDHILPACKEMADAVLFLFSFTDRSSFEDVPALISRTLGQEEDVARVVIGTKLDQYTHTDVTENDLRDFQRTWQLPVMRVRSVNGPRVAEGRGLDGRVGLVECAPVLNGLAEILWRRDQVIAGLVGGAD.

The segment at 52-255 is small GTPase-like; that stretch reads PADIASYKLF…VIAGLVGGAD (204 aa). GTP contacts are provided by residues 64–71 and 177–180; these read GRSGAGKT and TKLD.

It belongs to the small GTPase superfamily. Rab family.

It localises to the cytoplasm. Its subcellular location is the cytoskeleton. It is found in the cilium basal body. Its function is as follows. Potential effector of the planar cell polarity signaling pathway. Plays a role in targeted membrane trafficking most probably at the level of vesicle fusion with membranes. Involved in cilium biogenesis by regulating the transport of cargo proteins to the basal body and to the apical tips of cilia. More generally involved in exocytosis in secretory cells. This chain is Ciliogenesis and planar polarity effector 2 (cplane2), found in Xenopus tropicalis (Western clawed frog).